We begin with the raw amino-acid sequence, 570 residues long: Proline--tRNA ligase (570 aa).

The protein belongs to the class-II aminoacyl-tRNA synthetase family. ProS type 1 subfamily. As to quaternary structure, homodimer.

It localises to the cytoplasm. It carries out the reaction tRNA(Pro) + L-proline + ATP = L-prolyl-tRNA(Pro) + AMP + diphosphate. Its function is as follows. Catalyzes the attachment of proline to tRNA(Pro) in a two-step reaction: proline is first activated by ATP to form Pro-AMP and then transferred to the acceptor end of tRNA(Pro). As ProRS can inadvertently accommodate and process non-cognate amino acids such as alanine and cysteine, to avoid such errors it has two additional distinct editing activities against alanine. One activity is designated as 'pretransfer' editing and involves the tRNA(Pro)-independent hydrolysis of activated Ala-AMP. The other activity is designated 'posttransfer' editing and involves deacylation of mischarged Ala-tRNA(Pro). The misacylated Cys-tRNA(Pro) is not edited by ProRS. The chain is Proline--tRNA ligase from Clostridium beijerinckii (strain ATCC 51743 / NCIMB 8052) (Clostridium acetobutylicum).